The sequence spans 407 residues: [Pyruvate dehydrogenase (acetyl-transferring)] kinase isozyme 2, mitochondrial (407 aa).

Residues 135–364 enclose the Histidine kinase domain; it reads LEYKDTYGDD…DAVIYLKALS (230 aa). Phosphotyrosine is present on residues Tyr-215 and Tyr-216. Residues 251-258, Asp-290, 309-310, and 325-330 contribute to the ATP site; these read ELFKNAMR, ST, and GFGYGL. Lys-376 carries the post-translational modification N6-succinyllysine.

The protein belongs to the PDK/BCKDK protein kinase family. Homodimer, and heterodimer with PDK1. Interacts with the pyruvate dehydrogenase complex subunit DLAT, and is part of the multimeric pyruvate dehydrogenase complex that contains multiple copies of pyruvate dehydrogenase (E1), dihydrolipoamide acetyltransferase (DLAT, E2) and lipoamide dehydrogenase (DLD, E3). In terms of tissue distribution, detected in heart (at protein level). Highest level of expression in heart and skeletal muscle and the lowest in spleen and lung. Liver, kidney, brain and testis levels are intermediate.

Its subcellular location is the mitochondrion matrix. The enzyme catalyses L-seryl-[pyruvate dehydrogenase E1 alpha subunit] + ATP = O-phospho-L-seryl-[pyruvate dehydrogenase E1 alpha subunit] + ADP + H(+). With respect to regulation, activity increases in response to increased acetyl-CoA and NADH levels and upon binding to the pyruvate dehydrogenase subunit DLAT. Inhibited by ADP and pyruvate; these compounds interfere with DLAT binding and thereby inhibit kinase activity. Inhibited by dichloroacetate. Inhibited by AZD7545; this compound interferes with DLAT binding and thereby inhibits kinase activity. Reactive oxygen species cause the formation of disulfide bonds, and thereby inhibit the enzyme. In terms of biological role, kinase that plays a key role in the regulation of glucose and fatty acid metabolism and homeostasis via phosphorylation of the pyruvate dehydrogenase subunits PDHA1 and PDHA2. This inhibits pyruvate dehydrogenase activity, and thereby regulates metabolite flux through the tricarboxylic acid cycle, down-regulates aerobic respiration and inhibits the formation of acetyl-coenzyme A from pyruvate. Inhibition of pyruvate dehydrogenase decreases glucose utilization and increases fat metabolism. Mediates cellular responses to insulin. Plays an important role in maintaining normal blood glucose levels and in metabolic adaptation to nutrient availability. Via its regulation of pyruvate dehydrogenase activity, plays an important role in maintaining normal blood pH and in preventing the accumulation of ketone bodies under starvation. Plays a role in the regulation of cell proliferation and in resistance to apoptosis under oxidative stress. Plays a role in p53/TP53-mediated apoptosis. This Rattus norvegicus (Rat) protein is [Pyruvate dehydrogenase (acetyl-transferring)] kinase isozyme 2, mitochondrial (Pdk2).